Here is a 30-residue protein sequence, read N- to C-terminus: Mycofactocin precursor peptide (30 aa).

The protein belongs to the mycofactocin precursor peptide family. In terms of assembly, interacts with MftB. Post-translationally, the post-translational modifications that lead to mycofactocin involve oxidative decarboxylation of the C-terminal tyrosine residue catalyzed by MftC, introduction of a tyramine-valine cross-link, removal of the modified C-terminal dipeptide by MftE. The released dipeptide then undergoes oxidative deamination by MftD, glycosylation by MftF and methylation by an unknown enzyme.

Precursor peptide that leads to mycofactocin (MFT) after extensive post-translational modifications by enzymes encoded by adjacent genes. Mycofactocin acts as a redox cofactor of nicotinamide-dependent oxidoreductases encoded in the same locus. This Mycobacterium ulcerans (strain Agy99) protein is Mycofactocin precursor peptide.